We begin with the raw amino-acid sequence, 297 residues long: Glycine--tRNA ligase alpha subunit (297 aa).

It belongs to the class-II aminoacyl-tRNA synthetase family. As to quaternary structure, tetramer of two alpha and two beta subunits.

It is found in the cytoplasm. It carries out the reaction tRNA(Gly) + glycine + ATP = glycyl-tRNA(Gly) + AMP + diphosphate. The protein is Glycine--tRNA ligase alpha subunit of Sulfurihydrogenibium sp. (strain YO3AOP1).